A 116-amino-acid chain; its full sequence is MRHKHGYRKLNRTSAHRAALLKNLSIALTKEGKIETTLPKAKELRSYYEKLITKAASGDFNAHRAIFAMLQHKESTNTIVNEIAPKYADRNGGYTRIIKTRMRKGDSAPMAIIELV.

The protein belongs to the bacterial ribosomal protein bL17 family. As to quaternary structure, part of the 50S ribosomal subunit. Contacts protein L32.

This Sulfurovum sp. (strain NBC37-1) protein is Large ribosomal subunit protein bL17.